The primary structure comprises 296 residues: POM121-like protein 12 (296 aa).

Disordered regions lie at residues 1 to 54 (MGAA…SPWP) and 142 to 162 (APPE…RPAG). Low complexity predominate over residues 34-52 (SRSPSTPQTTPSPQGRQSP).

It belongs to the POM121 family.

This chain is POM121-like protein 12 (POM121L12), found in Homo sapiens (Human).